Consider the following 471-residue polypeptide: Tetratricopeptide repeat protein 29 (471 aa).

TPR repeat units lie at residues 92 to 131 (DKLPEAAKAQSLFWQQRPLEDQPDKLDNFYHYLTRAEAAE), 136 to 173 (YEEVYNNLYALACYFDNSEDKWVRNHFYERCFNIAQLI), 182 to 215 (AEAESHMGLLFEEEGELLKAAEHYEAFHELTHGR), 234 to 267 (VRTYRLLSDRMLENKDYKQAIKILIKASEIAREG), 274 to 307 (GEASYYLGLAHLASGEYETALTVLNRYSEISTSL), 314 to 347 (GRAYEAIAKALQSQGETTEAINYLEKFVTIARNN), and 354 to 387 (IRACTMLGDIYNEKGQYSKASEYFQQAFSTAMEL). The segment at 449–471 (ATEDNIYQLPDAEEETRRSPENQ) is disordered.

Expressed in spermatozoa (at protein level).

It is found in the cytoplasm. The protein resides in the cytoskeleton. Its subcellular location is the flagellum axoneme. In terms of biological role, axonemal protein which is implicated in axonemal and/or peri-axonemal structure assembly and regulates flagellum assembly and beating and therefore sperm motility. The sequence is that of Tetratricopeptide repeat protein 29 (Ttc29) from Mus musculus (Mouse).